The chain runs to 384 residues: ATP phosphoribosyltransferase regulatory subunit (384 aa).

This sequence belongs to the class-II aminoacyl-tRNA synthetase family. HisZ subfamily. As to quaternary structure, heteromultimer composed of HisG and HisZ subunits.

It is found in the cytoplasm. Its pathway is amino-acid biosynthesis; L-histidine biosynthesis; L-histidine from 5-phospho-alpha-D-ribose 1-diphosphate: step 1/9. Required for the first step of histidine biosynthesis. May allow the feedback regulation of ATP phosphoribosyltransferase activity by histidine. The chain is ATP phosphoribosyltransferase regulatory subunit from Azoarcus sp. (strain BH72).